A 280-amino-acid chain; its full sequence is Tryptophan synthase alpha chain (280 aa).

Catalysis depends on proton acceptor residues Glu49 and Asp60.

Belongs to the TrpA family. As to quaternary structure, tetramer of two alpha and two beta chains.

The catalysed reaction is (1S,2R)-1-C-(indol-3-yl)glycerol 3-phosphate + L-serine = D-glyceraldehyde 3-phosphate + L-tryptophan + H2O. It functions in the pathway amino-acid biosynthesis; L-tryptophan biosynthesis; L-tryptophan from chorismate: step 5/5. Its function is as follows. The alpha subunit is responsible for the aldol cleavage of indoleglycerol phosphate to indole and glyceraldehyde 3-phosphate. In Corynebacterium glutamicum (strain ATCC 13032 / DSM 20300 / JCM 1318 / BCRC 11384 / CCUG 27702 / LMG 3730 / NBRC 12168 / NCIMB 10025 / NRRL B-2784 / 534), this protein is Tryptophan synthase alpha chain.